Consider the following 868-residue polypeptide: Sporulation-specific protein 75 (868 aa).

Topologically, residues 1–34 (MNATKELTFNLLNKFQDKERFGSAQRHAGISLKG) are extracellular. N-linked (GlcNAc...) asparagine glycosylation occurs at N2. A helical membrane pass occupies residues 35–55 (FISGILFSFLYFLFQLSLFII). The Cytoplasmic segment spans residues 56-127 (LRSRFKTIYQ…DNYLFLRFLK (72 aa)). The helical transmembrane segment at 128-148 (LLIFFFAVLSIINIPILIPIH) threads the bilayer. Over 149-187 (YFSRDILKENEGERYEQSFRTTSKLDKWTMSNLSPNSSN) the chain is Extracellular. N184 is a glycosylation site (N-linked (GlcNAc...) asparagine). The helical transmembrane segment at 188-208 (TLICHLFLSIFVVLWFHFILS) threads the bilayer. Residues 209 to 481 (SELRFVNRLG…AKYFSANILR (273 aa)) are Cytoplasmic-facing. The chain crosses the membrane as a helical span at residues 482 to 502 (IFVIIGWILPVAFLGLISQIP). Residue N503 is glycosylated (N-linked (GlcNAc...) asparagine). Residues 503 to 527 (NISSLIPFTKIIHFQSPFIREVAKN) lie on the Extracellular side of the membrane. Residues 528-548 (LIPIVTLIIIIEIVPYFFRWL) form a helical membrane-spanning segment. Over 549 to 569 (SYLRGLKTGAQIEADVQNWYF) the chain is Cytoplasmic. A helical membrane pass occupies residues 570–590 (VFVFIHLFVVVTISSGFSIII). The Extracellular portion of the chain corresponds to 591-611 (ERLLNNPVSIPALLANDLPKC). A helical membrane pass occupies residues 612–632 (ANFFCSFVLIRGMAYAGGNLL). At 633–660 (RIKELLFELFYYKWKRSTPHAQFKRLKT) the chain is on the cytoplasmic side. The helical transmembrane segment at 661 to 683 (SLFFQLGSIYPIFSVLGCIGIIY) threads the bilayer. Over 684 to 692 (SVVAPIILL) the chain is Extracellular. A helical membrane pass occupies residues 693-713 (LCCISFSMVFFSFSYLFKYQY). Over 714 to 730 (NKENYSETFGKLYIQAL) the chain is Cytoplasmic. The chain crosses the membrane as a helical span at residues 731 to 751 (MQLYAGIYFMEFCLLGLFTLF). Residues 752–753 (DQ) are Extracellular-facing. A helical transmembrane segment spans residues 754–774 (YTLSTIMLVVFALTVITHSKI). Residues 775–868 (SKQIKSKPQR…DCHLENSHLH (94 aa)) lie on the Cytoplasmic side of the membrane.

Belongs to the CSC1 (TC 1.A.17) family.

The protein localises to the membrane. Functionally, acts as an osmosensitive calcium-permeable cation channel. Required for spore wall assembly and ascus formation. The chain is Sporulation-specific protein 75 (SPO75) from Saccharomyces cerevisiae (strain ATCC 204508 / S288c) (Baker's yeast).